Here is a 317-residue protein sequence, read N- to C-terminus: tRNA dimethylallyltransferase (317 aa).

ATP is bound at residue 14-21 (GPTAVGKT). A substrate-binding site is contributed by 16–21 (TAVGKT). The segment at 39-42 (DSMQ) is interaction with substrate tRNA.

It belongs to the IPP transferase family. As to quaternary structure, monomer. It depends on Mg(2+) as a cofactor.

The catalysed reaction is adenosine(37) in tRNA + dimethylallyl diphosphate = N(6)-dimethylallyladenosine(37) in tRNA + diphosphate. Functionally, catalyzes the transfer of a dimethylallyl group onto the adenine at position 37 in tRNAs that read codons beginning with uridine, leading to the formation of N6-(dimethylallyl)adenosine (i(6)A). The polypeptide is tRNA dimethylallyltransferase (Bacillus cereus (strain AH820)).